Here is a 313-residue protein sequence, read N- to C-terminus: Formimidoylglutamase (313 aa).

Mn(2+)-binding residues include H130, D155, H157, D159, D241, and D243.

Belongs to the arginase family. Mn(2+) serves as cofactor.

The enzyme catalyses N-formimidoyl-L-glutamate + H2O = formamide + L-glutamate. Its pathway is amino-acid degradation; L-histidine degradation into L-glutamate; L-glutamate from N-formimidoyl-L-glutamate (hydrolase route): step 1/1. Functionally, catalyzes the conversion of N-formimidoyl-L-glutamate to L-glutamate and formamide. The sequence is that of Formimidoylglutamase from Salmonella typhi.